We begin with the raw amino-acid sequence, 259 residues long: Pimeloyl-[acyl-carrier protein] methyl ester esterase (259 aa).

Substrate contacts are provided by residues Trp18, Ser78–Leu79, and Phe139–Asp143. The Nucleophile role is filled by Ser78. Active-site residues include Asp203 and His231. His231 serves as a coordination point for substrate.

It belongs to the AB hydrolase superfamily. Carboxylesterase BioH family. In terms of assembly, monomer.

Its subcellular location is the cytoplasm. The enzyme catalyses 6-carboxyhexanoyl-[ACP] methyl ester + H2O = 6-carboxyhexanoyl-[ACP] + methanol + H(+). Its pathway is cofactor biosynthesis; biotin biosynthesis. The physiological role of BioH is to remove the methyl group introduced by BioC when the pimeloyl moiety is complete. It allows to synthesize pimeloyl-ACP via the fatty acid synthetic pathway through the hydrolysis of the ester bonds of pimeloyl-ACP esters. This Stenotrophomonas maltophilia (strain K279a) protein is Pimeloyl-[acyl-carrier protein] methyl ester esterase.